The primary structure comprises 545 residues: Chaperonin GroEL (545 aa).

ATP is bound by residues 30–33 (TMGP), K51, 87–91 (DGTTT), G416, 479–481 (NAA), and D495.

Belongs to the chaperonin (HSP60) family. As to quaternary structure, forms a cylinder of 14 subunits composed of two heptameric rings stacked back-to-back. Interacts with the co-chaperonin GroES.

Its subcellular location is the cytoplasm. It carries out the reaction ATP + H2O + a folded polypeptide = ADP + phosphate + an unfolded polypeptide.. In terms of biological role, together with its co-chaperonin GroES, plays an essential role in assisting protein folding. The GroEL-GroES system forms a nano-cage that allows encapsulation of the non-native substrate proteins and provides a physical environment optimized to promote and accelerate protein folding. The sequence is that of Chaperonin GroEL from Nautilia profundicola (strain ATCC BAA-1463 / DSM 18972 / AmH).